We begin with the raw amino-acid sequence, 550 residues long: Integral membrane protein DGCR2/IDD (550 aa).

The signal sequence occupies residues 1–20 (MVPKADSGAFLLLFLLVLTV). The Extracellular portion of the chain corresponds to 21–349 (TEPLRPELRC…LFDSMASGMR (329 aa)). Residues 28-68 (LRCNPGQFACRSGTIQCIPLPWQCDGWATCEDESDEANCPE) enclose the LDL-receptor class A domain. Disulfide bonds link Cys30/Cys44, Cys37/Cys57, and Cys51/Cys66. The disordered stretch occupies residues 69–92 (VTGEVRPHHGKEAVDPRQGRARGG). Over residues 71–92 (GEVRPHHGKEAVDPRQGRARGG) the composition is skewed to basic and acidic residues. The region spanning 115 to 241 (CPTGWHHYEG…FCAQLQCFHF (127 aa)) is the C-type lectin domain. 2 disulfides stabilise this stretch: Cys145–Cys265 and Cys233–Cys257. Residues Asn149 and Asn196 are each glycosylated (N-linked (GlcNAc...) asparagine). A VWFC domain is found at 270–333 (TCVDIKDNVV…PKECCKFMCL (64 aa)). A helical membrane pass occupies residues 350-368 (LVVSCISSFLILSLLLFMV). Residues 369-550 (HRLRQRRRER…HSRSSLNTVV (182 aa)) lie on the Cytoplasmic side of the membrane. Ser381 is modified (phosphoserine). Residues 500–550 (AGASLADLEDSADSSSALLVPPDPAQSGSTPAAEALPGGGRHSRSSLNTVV) are disordered.

Predominantly expressed in brain, heart, lung and fetal kidney. Low levels in liver and adult kidney.

The protein localises to the membrane. Functionally, putative adhesion receptor, that could be involved in cell-cell or cell-matrix interactions required for normal cell differentiation and migration. The protein is Integral membrane protein DGCR2/IDD (DGCR2) of Homo sapiens (Human).